Reading from the N-terminus, the 326-residue chain is Protein-ribulosamine 3-kinase, chloroplastic (326 aa).

A chloroplast-targeting transit peptide spans 1-30 (MAVASLSICFSARPHLLLRNFSPRPKFVAM). ATP is bound at residue 125–127 (EFI). Aspartate 230 acts as the Proton acceptor in catalysis.

The protein belongs to the fructosamine kinase family.

The protein resides in the plastid. It localises to the chloroplast. It carries out the reaction N(6)-D-ribulosyl-L-lysyl-[protein] + ATP = N(6)-(3-O-phospho-D-ribulosyl)-L-lysyl-[protein] + ADP + H(+). The catalysed reaction is N(6)-(D-erythrulosyl)-L-lysyl-[protein] + ATP = N(6)-(3-O-phospho-D-erythrulosyl)-L-lysyl-[protein] + ADP + H(+). Functionally, initiates a process leading to the deglycation of proteins. Phosphorylates low-molecular-mass and protein-bound erythrulosamines and ribulosamines, but not fructosamines or psicosamines, on the third carbon of the sugar moiety. Protein-bound erythrulosamine 3-phosphates and ribulosamine 3-phosphates are unstable and decompose under physiological conditions. The chain is Protein-ribulosamine 3-kinase, chloroplastic from Arabidopsis thaliana (Mouse-ear cress).